The primary structure comprises 716 residues: Myogenesis-regulating glycosidase (716 aa).

Residues 1-11 are compositionally biased toward polar residues; that stretch reads MSQNLQETSQA. The interval 1-26 is disordered; sequence MSQNLQETSQAYPRHRPGSHAGPKSL. The Cytoplasmic segment spans residues 1 to 55; it reads MSQNLQETSQAYPRHRPGSHAGPKSLKVTPRATMYTFLPDNFSPAKPKPTKELRP. A helical; Signal-anchor for type II membrane protein transmembrane segment spans residues 56–76; the sequence is LLCSAVLGLLLVLAAVVAWCY. The Extracellular segment spans residues 77–716; that stretch reads YSASLRKAER…DEVAYFTWAS (640 aa). 3 N-linked (GlcNAc...) asparagine glycosylation sites follow: Asn239, Asn249, and Asn455. Catalysis depends on residues Asp462 and Glu465. Asp527 functions as the Proton donor in the catalytic mechanism.

The protein belongs to the glycosyl hydrolase 31 family. Interacts with IGF2; this interaction is required for IGF2 secretion. In terms of tissue distribution, expressed in brain, liver, spleen, skeletal muscle, heart, lung and kidney. High expression is observed in the cerebellum, specifically in astrocytes. Highly expressed in skeletal muscle (at protein level).

It localises to the nucleus membrane. The protein localises to the endoplasmic reticulum membrane. Its function is as follows. Putative glycosidase. Promotes myogenesis by activating AKT signaling through the maturation and secretion of IGF2. The protein is Myogenesis-regulating glycosidase (Myorg) of Mus musculus (Mouse).